Here is a 351-residue protein sequence, read N- to C-terminus: Penicillolysin (351 aa).

Positions 1–19 (MRFTTLSTAFLALAQNVYA) are cleaved as a signal peptide. Residues 20–174 (FPIESDLSAL…TKALKPLDRR (155 aa)) constitute a propeptide that is removed on maturation. 2 N-linked (GlcNAc...) asparagine glycosylation sites follow: N52 and N181. H302 is a Zn(2+) binding site. E303 is an active-site residue. Zn(2+) is bound by residues H306 and D317.

It belongs to the peptidase M35 family. It depends on Zn(2+) as a cofactor.

The enzyme catalyses Preferential cleavage of bonds with hydrophobic residues in P1'. Also 3-Asn-|-Gln-4 and 8-Gly-|-Ser-9 bonds in insulin B chain.. In Penicillium citrinum, this protein is Penicillolysin (plnC).